A 305-amino-acid polypeptide reads, in one-letter code: Probable 4-deoxy-4-formamido-L-arabinose-phosphoundecaprenol deformylase ArnD (305 aa).

In terms of domain architecture, NodB homology spans 7–262 (TKVGLRIDVD…QAKENNIEFV (256 aa)).

Belongs to the polysaccharide deacetylase family. ArnD deformylase subfamily.

The catalysed reaction is 4-deoxy-4-formamido-alpha-L-arabinopyranosyl di-trans,octa-cis-undecaprenyl phosphate + H2O = 4-amino-4-deoxy-alpha-L-arabinopyranosyl di-trans,octa-cis-undecaprenyl phosphate + formate. The protein operates within glycolipid biosynthesis; 4-amino-4-deoxy-alpha-L-arabinose undecaprenyl phosphate biosynthesis; 4-amino-4-deoxy-alpha-L-arabinose undecaprenyl phosphate from UDP-4-deoxy-4-formamido-beta-L-arabinose and undecaprenyl phosphate: step 2/2. It functions in the pathway bacterial outer membrane biogenesis; lipopolysaccharide biosynthesis. In terms of biological role, catalyzes the deformylation of 4-deoxy-4-formamido-L-arabinose-phosphoundecaprenol to 4-amino-4-deoxy-L-arabinose-phosphoundecaprenol. The modified arabinose is attached to lipid A and is required for resistance to polymyxin and cationic antimicrobial peptides. The protein is Probable 4-deoxy-4-formamido-L-arabinose-phosphoundecaprenol deformylase ArnD of Shewanella sediminis (strain HAW-EB3).